A 499-amino-acid polypeptide reads, in one-letter code: Na(+)/H(+) antiporter NhaB (499 aa).

12 helical membrane passes run 38 to 58 (VSPFLAGWALIIEFIFTLAMA), 62 to 82 (YPLQPGGLLAIQAVLLGLTSA), 89 to 109 (VLANFKVILLLMFMVAGIYFM), 128 to 148 (LLLSLLFSFVAAVLSAFLDAL), 149 to 169 (TVTAVLIAVAVGFYAVYHRFA), 204 to 224 (LIMHGAVGTALGGVATLVGEP), 242 to 262 (LVMAPISVPALIGGLLTCAIL), 310 to 330 (VLVFALALHLAEVGLIGLLII), 349 to 369 (FEEALPFTALLVVFFAVVAVI), 393 to 413 (MFFVANGVLSMISDNVFVATV), 449 to 469 (ATPNGQAAFLFLLTSALAPLI), and 478 to 498 (IMALPYTIVLGAVGLGSVILF).

This sequence belongs to the NhaB Na(+)/H(+) (TC 2.A.34) antiporter family.

It is found in the cell inner membrane. The catalysed reaction is 2 Na(+)(in) + 3 H(+)(out) = 2 Na(+)(out) + 3 H(+)(in). Na(+)/H(+) antiporter that extrudes sodium in exchange for external protons. The sequence is that of Na(+)/H(+) antiporter NhaB from Saccharophagus degradans (strain 2-40 / ATCC 43961 / DSM 17024).